The following is a 273-amino-acid chain: Glutamate 5-kinase (273 aa).

Lys-15 lines the ATP pocket. Substrate-binding residues include Ser-55, Asp-142, and Asn-158. Residues 178 to 179 (SD) and 220 to 226 (TGGMLSK) contribute to the ATP site.

This sequence belongs to the glutamate 5-kinase family.

Its subcellular location is the cytoplasm. The catalysed reaction is L-glutamate + ATP = L-glutamyl 5-phosphate + ADP. Its pathway is amino-acid biosynthesis; L-proline biosynthesis; L-glutamate 5-semialdehyde from L-glutamate: step 1/2. Functionally, catalyzes the transfer of a phosphate group to glutamate to form L-glutamate 5-phosphate. This chain is Glutamate 5-kinase, found in Streptococcus pyogenes serotype M3 (strain ATCC BAA-595 / MGAS315).